The chain runs to 631 residues: Phosphomethylpyrimidine synthase (631 aa).

Substrate is bound by residues N239, M268, Y297, H333, S353 to G355, D394 to R397, and E433. Zn(2+) is bound at residue H437. Y460 lines the substrate pocket. H501 lines the Zn(2+) pocket. Residues C581, C584, and C589 each coordinate [4Fe-4S] cluster.

It belongs to the ThiC family. In terms of assembly, homodimer. It depends on [4Fe-4S] cluster as a cofactor.

It catalyses the reaction 5-amino-1-(5-phospho-beta-D-ribosyl)imidazole + S-adenosyl-L-methionine = 4-amino-2-methyl-5-(phosphooxymethyl)pyrimidine + CO + 5'-deoxyadenosine + formate + L-methionine + 3 H(+). The protein operates within cofactor biosynthesis; thiamine diphosphate biosynthesis. Catalyzes the synthesis of the hydroxymethylpyrimidine phosphate (HMP-P) moiety of thiamine from aminoimidazole ribotide (AIR) in a radical S-adenosyl-L-methionine (SAM)-dependent reaction. This chain is Phosphomethylpyrimidine synthase, found in Escherichia coli O45:K1 (strain S88 / ExPEC).